A 21-amino-acid chain; its full sequence is 71 kDa F-actin-binding protein (21 aa).

This sequence to yeast fimbrin. Post-translationally, the N-terminus is blocked.

Its function is as follows. Binds directly to F-actin and induces actin filament bundling. May function as a regulator of actin filament organization. This is 71 kDa F-actin-binding protein from Tetrahymena pyriformis.